The chain runs to 132 residues: Large ribosomal subunit protein uL14 (132 aa).

The protein belongs to the universal ribosomal protein uL14 family. In terms of assembly, part of the 50S ribosomal subunit. Forms a cluster with proteins L3 and L24e, part of which may contact the 16S rRNA in 2 intersubunit bridges.

Binds to 23S rRNA. Forms part of two intersubunit bridges in the 70S ribosome. In Methanocella arvoryzae (strain DSM 22066 / NBRC 105507 / MRE50), this protein is Large ribosomal subunit protein uL14.